Reading from the N-terminus, the 488-residue chain is UDP-N-acetylmuramate--L-alanine ligase (488 aa).

ATP is bound at residue 129 to 135 (GTHGKTT).

It belongs to the MurCDEF family.

It is found in the cytoplasm. It catalyses the reaction UDP-N-acetyl-alpha-D-muramate + L-alanine + ATP = UDP-N-acetyl-alpha-D-muramoyl-L-alanine + ADP + phosphate + H(+). The protein operates within cell wall biogenesis; peptidoglycan biosynthesis. Cell wall formation. The polypeptide is UDP-N-acetylmuramate--L-alanine ligase (Chromohalobacter salexigens (strain ATCC BAA-138 / DSM 3043 / CIP 106854 / NCIMB 13768 / 1H11)).